Consider the following 131-residue polypeptide: Large ribosomal subunit protein bL19 (131 aa).

The protein belongs to the bacterial ribosomal protein bL19 family.

Its function is as follows. This protein is located at the 30S-50S ribosomal subunit interface and may play a role in the structure and function of the aminoacyl-tRNA binding site. The protein is Large ribosomal subunit protein bL19 of Caulobacter sp. (strain K31).